Consider the following 309-residue polypeptide: NAD-dependent protein deacylase sirtuin-5A, mitochondrial (309 aa).

Residues 1–35 (MILLTFHTRRLVSHAYCGLKPASQKKSIALEMTRP) constitute a mitochondrion transit peptide. The 271-residue stretch at 36 to 306 (SSNLADFREA…PPALARHETE (271 aa)) folds into the Deacetylase sirtuin-type domain. 57 to 76 (GAGVSAESGVPTFRGAGGYW) lines the NAD(+) pocket. The substrate site is built by tyrosine 101 and arginine 104. Position 139–142 (139–142 (QNID)) interacts with NAD(+). Histidine 157 functions as the Proton acceptor in the catalytic mechanism. Zn(2+) contacts are provided by cysteine 165, cysteine 168, cysteine 206, and cysteine 211. NAD(+) contacts are provided by residues 248-250 (GTS), 274-276 (NME), and cysteine 292.

This sequence belongs to the sirtuin family. Class III subfamily. It depends on Zn(2+) as a cofactor.

It is found in the mitochondrion. The protein localises to the cytoplasm. The protein resides in the cytosol. It localises to the nucleus. It carries out the reaction N(6)-malonyl-L-lysyl-[protein] + NAD(+) + H2O = 2''-O-malonyl-ADP-D-ribose + nicotinamide + L-lysyl-[protein]. The enzyme catalyses N(6)-succinyl-L-lysyl-[protein] + NAD(+) + H2O = 2''-O-succinyl-ADP-D-ribose + nicotinamide + L-lysyl-[protein]. It catalyses the reaction N(6)-glutaryl-L-lysyl-[protein] + NAD(+) + H2O = 2''-O-glutaryl-ADP-D-ribose + nicotinamide + L-lysyl-[protein]. Its function is as follows. NAD-dependent lysine demalonylase, desuccinylase and deglutarylase that specifically removes malonyl, succinyl and glutaryl groups on target proteins. Has weak NAD-dependent protein deacetylase activity; however this activity may not be physiologically relevant in vivo. The chain is NAD-dependent protein deacylase sirtuin-5A, mitochondrial (sirt5-a) from Xenopus laevis (African clawed frog).